The chain runs to 517 residues: 2-isopropylmalate synthase (517 aa).

Positions 4–266 (INFFDTTLRD…ESTIQLNEIK (263 aa)) constitute a Pyruvate carboxyltransferase domain. Residues D13, H201, H203, and N237 each coordinate Mn(2+). Residues 391-517 (EFESLQVHYG…IEIEKHHAIS (127 aa)) form a regulatory domain region.

It belongs to the alpha-IPM synthase/homocitrate synthase family. LeuA type 1 subfamily. As to quaternary structure, homodimer. Mn(2+) serves as cofactor.

It is found in the cytoplasm. It carries out the reaction 3-methyl-2-oxobutanoate + acetyl-CoA + H2O = (2S)-2-isopropylmalate + CoA + H(+). It participates in amino-acid biosynthesis; L-leucine biosynthesis; L-leucine from 3-methyl-2-oxobutanoate: step 1/4. In terms of biological role, catalyzes the condensation of the acetyl group of acetyl-CoA with 3-methyl-2-oxobutanoate (2-ketoisovalerate) to form 3-carboxy-3-hydroxy-4-methylpentanoate (2-isopropylmalate). The sequence is that of 2-isopropylmalate synthase from Bacillus pumilus (strain SAFR-032).